Here is a 495-residue protein sequence, read N- to C-terminus: GTPase Der (495 aa).

EngA-type G domains follow at residues 3 to 166 (PVIA…MDAE) and 208 to 381 (IKLA…DCST). GTP-binding positions include 9-16 (GRPNVGKS), 56-60 (DTGGI), 118-121 (NKTD), 214-221 (GRPNVGKS), 261-265 (DTAGV), and 326-329 (NKWD). A KH-like domain is found at 382 to 466 (KRVGTSLLTR…PIRIQFKEGE (85 aa)).

The protein belongs to the TRAFAC class TrmE-Era-EngA-EngB-Septin-like GTPase superfamily. EngA (Der) GTPase family. As to quaternary structure, associates with the 50S ribosomal subunit.

Functionally, GTPase that plays an essential role in the late steps of ribosome biogenesis. In Yersinia pseudotuberculosis serotype IB (strain PB1/+), this protein is GTPase Der.